Reading from the N-terminus, the 293-residue chain is 4-diphosphocytidyl-2-C-methyl-D-erythritol kinase (293 aa).

Lys16 is an active-site residue. ATP is bound at residue 99–109 (PMGAGLGGGSS). Residue Asp141 is part of the active site.

The protein belongs to the GHMP kinase family. IspE subfamily.

It carries out the reaction 4-CDP-2-C-methyl-D-erythritol + ATP = 4-CDP-2-C-methyl-D-erythritol 2-phosphate + ADP + H(+). Its pathway is isoprenoid biosynthesis; isopentenyl diphosphate biosynthesis via DXP pathway; isopentenyl diphosphate from 1-deoxy-D-xylulose 5-phosphate: step 3/6. In terms of biological role, catalyzes the phosphorylation of the position 2 hydroxy group of 4-diphosphocytidyl-2C-methyl-D-erythritol. This chain is 4-diphosphocytidyl-2-C-methyl-D-erythritol kinase, found in Burkholderia thailandensis (strain ATCC 700388 / DSM 13276 / CCUG 48851 / CIP 106301 / E264).